The primary structure comprises 294 residues: Type 4 apparatus protein DotZ (294 aa).

In terms of assembly, the T4BSS is a complex nanomachine composed of several subcomplexes. This subunit is part of the Type IV Coupling Complex (T4CC), a subcomplex composed of the DotLMNYZ core and the IcmSW-LvgA adapter subunits, linked by the C-terminal tail of DotL. Six DotLMNYZ hetero-pentameric units may assemble into a hexameric nanomachine, forming an inner membrane channel for effectors to pass through. Makes significant contact with DotN and DotY, but engages weakly with DotM and DotL. DotY and DotZ are co-dependent for the assembly into the T4CC.

Its subcellular location is the cytoplasm. Functionally, component of the Dot/Icm type IVB secretion system (T4BSS), which is used to inject bacterial effector proteins into eukaryotic host cells. Part of a subcomplex which recruits effector proteins and delivers them to the core transmembrane subcomplex. DotY and DotZ play a role in effector translocation, but are not essential and do not influence the stability of the subcomplex main components. The DotY/DotZ main function is to optimize secretion by modulating the delivery trajectory of the IcmSW module and the localization of the machinery to the poles. This Legionella pneumophila subsp. pneumophila (strain Philadelphia 1 / ATCC 33152 / DSM 7513) protein is Type 4 apparatus protein DotZ.